A 434-amino-acid chain; its full sequence is Tyrosine-protein phosphatase non-receptor type 1 (434 aa).

Positions 3–277 (IEKEFHRLDQ…RFSYLAVIEG (275 aa)) constitute a Tyrosine-protein phosphatase domain. Ser50 bears the Phosphoserine mark. Substrate is bound by residues Asp181, 215–221 (CSAGIGR), and Gln262. Cys215 functions as the Phosphocysteine intermediate in the catalytic mechanism. A disordered region spans residues 291–319 (WKELSNEDLDPPPEHTPPPPRPPKRTSEM).

This sequence belongs to the protein-tyrosine phosphatase family. Non-receptor class 1 subfamily. As to quaternary structure, interacts with EPHA3 (phosphorylated); dephosphorylates EPHA3 and may regulate its trafficking and function. Interacts with MET. Interacts with NCK1. Post-translationally, phosphorylated on serine and threonine residues near the N-terminus by casein kinase II (CK2).

The protein localises to the endoplasmic reticulum membrane. It carries out the reaction O-phospho-L-tyrosyl-[protein] + H2O = L-tyrosyl-[protein] + phosphate. In terms of biological role, may play an important role in CKII- and p60c-src-induced signal transduction cascades. May regulate the EFNA5-EPHA3 signaling pathway which modulates cell reorganization and cell-cell repulsion. May also regulate the hepatocyte growth factor receptor signaling pathway through dephosphorylation of MET. This chain is Tyrosine-protein phosphatase non-receptor type 1 (PTPN1), found in Gallus gallus (Chicken).